The chain runs to 745 residues: UPF0508 protein YJR030C (745 aa).

The protein belongs to the UPF0508 family.

The sequence is that of UPF0508 protein YJR030C from Saccharomyces cerevisiae (strain ATCC 204508 / S288c) (Baker's yeast).